Here is a 396-residue protein sequence, read N- to C-terminus: Alpha-1-antitrypsin (396 aa).

Residues 1-2 form the signal peptide; that stretch reads HV. Residues 1–24 form a disordered region; the sequence is HVEDPQGDAAQKTDTSHHDQEHST. Residues 14–24 are compositionally biased toward basic and acidic residues; sequence DTSHHDQEHST. Phosphoserine is present on Ser-16. N-linked (GlcNAc...) asparagine glycosylation is found at Asn-48, Asn-85, Asn-123, and Asn-249. An RCL region spans residues 351-370; the sequence is GAMFLEAIPMSIPPEVKFNK. Ser-361 carries the post-translational modification Phosphoserine.

The protein belongs to the serpin family. As to quaternary structure, interacts with CELA2A. Interacts with ERGIC3 and LMAN1/ERGIC53. Interacts with PRSS1/Trypsin. As to expression, plasma.

The protein localises to the secreted. Functionally, inhibitor of serine proteases. Its primary target is elastase, but it also has a moderate affinity for plasmin and thrombin. Inhibits trypsin, chymotrypsin and plasminogen activator. The protein is Alpha-1-antitrypsin (SERPINA1) of Chlorocebus aethiops (Green monkey).